A 716-amino-acid polypeptide reads, in one-letter code: Protein Hook homolog 2 (716 aa).

The tract at residues 1-161 (MSVDKAELCG…ELMTKDTPDS (161 aa)) is required for localization to the centrosome and induction of aggresome formation. The sufficient for interaction with microtubules stretch occupies residues 1–546 (MSVDKAELCG…LKRKLEDHLQ (546 aa)). Residues 6-122 (AELCGSLLTW…KLLQLVLGCA (117 aa)) enclose the Calponin-homology (CH) domain. S163 bears the Phosphoserine mark. 2 coiled-coil regions span residues 188–427 (DHLQ…AQLQ) and 455–605 (AELR…VDKA). The required for localization to the centrosome and induction of aggresome formation stretch occupies residues 533–716 (DPTLLKRKLE…ALSLRPTDKH (184 aa)). Positions 582–716 (DSLQKKDADL…ALSLRPTDKH (135 aa)) are sufficient for interaction with CNTRL.

This sequence belongs to the hook family. Self-associates. Component of the FTS/Hook/FHIP complex (FHF complex), composed of AKTIP/FTS, FHIP1B, and one or more members of the Hook family of proteins HOOK1, HOOK2, and HOOK3. May interact directly with AKTIP/FTS, HOOK1 and HOOK3. Associates with several subunits of the homotypic vesicular sorting complex (the HOPS complex) including VPS16 and VPS41; these interactions may be indirect. Interacts with CNTRL. Interacts with microtubules. Interacts with ZC3H14. Interacts with LRGUK (via guanylate kinase-like domain). Interacts with CCDC181. Interacts with AP4M1; the interaction is direct, mediates the interaction between FTS-Hook-FHIP (FHF) complex and AP-4 and the perinuclear distribution of AP-4. As to expression, expressed in brain, cerebellum, kidney, liver and heart, with highest levels in heart and kidney (at protein level).

It localises to the cytoplasm. The protein localises to the cytoskeleton. The protein resides in the microtubule organizing center. Its subcellular location is the centrosome. It is found in the golgi apparatus. It localises to the trans-Golgi network. Functionally, component of the FTS/Hook/FHIP complex (FHF complex). The FHF complex may function to promote vesicle trafficking and/or fusion via the homotypic vesicular protein sorting complex (the HOPS complex). Contributes to the establishment and maintenance of centrosome function. May function in the positioning or formation of aggresomes, which are pericentriolar accumulations of misfolded proteins, proteasomes and chaperones. FHF complex promotes the distribution of AP-4 complex to the perinuclear area of the cell. In Mus musculus (Mouse), this protein is Protein Hook homolog 2 (Hook2).